Consider the following 1714-residue polypeptide: Latrophilin Cirl (1714 aa).

The Extracellular portion of the chain corresponds to 1–765 (MSSIDISGRY…LFTMFDGNMR (765 aa)). Residues 26-115 (ACEGKKLTIE…KYLEAHYQCI (90 aa)) enclose the SUEL-type lectin domain. N-linked (GlcNAc...) asparagine glycosylation is present at N143. A disordered region spans residues 183-302 (PPHTVTHSTP…GSPASGNNSV (120 aa)). The span at 186-198 (TVTHSTPSSSTVP) shows a compositional bias: low complexity. Polar residues predominate over residues 244-262 (PSSKLPSAGNATAPSNTRI). N253 carries N-linked (GlcNAc...) asparagine glycosylation. Composition is skewed to low complexity over residues 272-282 (DDGTLLTTKSS) and 290-301 (ASNGSPASGNNS). 6 N-linked (GlcNAc...) asparagine glycosylation sites follow: N299, N338, N395, N652, N701, and N728. The segment at 373-397 (YDEYDDDPSSTTPAPSGGDCLHNSS) is disordered. The GAIN-B domain occupies 558–752 (RSVVQKVKNI…AILMDVVDEH (195 aa)). Disulfide bonds link C707/C734 and C722/C736. A GPS region spans residues 707–752 (CVFWNYIDHAWSANGCSLESTNRTHSVCSCNHLTNFAILMDVVDEH). The helical transmembrane segment at 766 to 786 (VFIYISIAICVVFIVIALLTL) threads the bilayer. The Cytoplasmic segment spans residues 787–799 (KLFNGVFVKSART). The helical transmembrane segment at 800–820 (TIYTSIYVCLLAIELLFLLGI) threads the bilayer. The Extracellular portion of the chain corresponds to 821–826 (EQTETS). The chain crosses the membrane as a helical span at residues 827–847 (IFCGFITVFLHCAILSGAAWF). Residues 848-873 (CYEAFHSYYTLTSDELLVEVDQTPKV) lie on the Cytoplasmic side of the membrane. Residues 874–894 (NWYYLLSYGLSVSVVAISVAI) traverse the membrane as a helical segment. Residues 895 to 911 (NPSTYTQNDYCVLMEAN) are Extracellular-facing. A helical transmembrane segment spans residues 912–932 (ILFYATFVAPVLIFFVAAIGY). At 933–966 (TFLSWIIMCRKSCTGLKTKEHTRLASVRFDIRCS) the chain is on the cytoplasmic side. Residues 967-987 (FVFLLLLSAVWCSAYFYLRGA) traverse the membrane as a helical segment. The Extracellular segment spans residues 988–994 (KTDEDTT). A helical membrane pass occupies residues 995 to 1015 (TIYGYCFICFNTLLGLYIFVF). The Cytoplasmic segment spans residues 1016–1714 (HCIQNEKIRR…VRCYLEPLAK (699 aa)). A phosphoserine mark is found at S1155, S1245, and S1252. 5 disordered regions span residues 1229–1253 (PNSQ…LHSR), 1268–1287 (KTKQ…LDPP), 1293–1354 (AFYQ…PPPH), 1447–1536 (GGGS…DERM), and 1551–1694 (FQRQ…QQRH). The segment covering 1296 to 1315 (QQQQQMRRQQQQQQQQQQQQ) has biased composition (low complexity). Phosphoserine is present on residues S1317 and S1318. Composition is skewed to low complexity over residues 1330–1348 (LHLQ…QQQL) and 1453–1478 (GGSV…QQQR). Acidic residues-rich tracts occupy residues 1486–1500 (DDDD…DEAT) and 1510–1523 (CDDD…DLDD). Residues 1524 to 1536 (DAHKLPPQSDERM) show a composition bias toward basic and acidic residues. Positions 1565–1580 (GALPPGVAPGAGSAGP) are enriched in low complexity. The segment covering 1644–1659 (QTPAQKRQQLQKLSPQ) has biased composition (polar residues). Over residues 1660-1675 (STTSSSSHTSHSNLQP) the composition is skewed to low complexity. Over residues 1679 to 1693 (PLTHQHPHPPQHQQR) the composition is skewed to basic residues.

It belongs to the G-protein coupled receptor 2 family. LN-TM7 subfamily. Forms a heterodimer, consisting of a large extracellular region non-covalently linked to a seven-transmembrane moiety. In terms of processing, proteolytically cleaved into 2 subunits, an extracellular subunit and a seven-transmembrane subunit.

It localises to the cell membrane. This chain is Latrophilin Cirl, found in Drosophila ananassae (Fruit fly).